The chain runs to 247 residues: Golgi-associated RAB2 interactor protein 5A (247 aa).

Over residues Met1–Gly16 the composition is skewed to pro residues. 2 disordered regions span residues Met1–Arg22 and Gly60–Arg92.

The protein belongs to the GARIN family. Interacts (via N-terminus) with RAB2B (in GTP-bound form).

The protein resides in the golgi apparatus. Functionally, RAB2B effector protein which promotes cytosolic DNA-induced innate immune responses. Regulates IFN responses against DNA viruses by regulating the CGAS-STING signaling axis. This chain is Golgi-associated RAB2 interactor protein 5A, found in Homo sapiens (Human).